Reading from the N-terminus, the 289-residue chain is Release factor glutamine methyltransferase (289 aa).

Residues 130–134 (GTGTG), D153, W182, and N196 each bind S-adenosyl-L-methionine. Residue 196-199 (NPPY) coordinates substrate.

It belongs to the protein N5-glutamine methyltransferase family. PrmC subfamily.

The enzyme catalyses L-glutaminyl-[peptide chain release factor] + S-adenosyl-L-methionine = N(5)-methyl-L-glutaminyl-[peptide chain release factor] + S-adenosyl-L-homocysteine + H(+). In terms of biological role, methylates the class 1 translation termination release factors RF1/PrfA and RF2/PrfB on the glutamine residue of the universally conserved GGQ motif. In Agrobacterium fabrum (strain C58 / ATCC 33970) (Agrobacterium tumefaciens (strain C58)), this protein is Release factor glutamine methyltransferase.